A 220-amino-acid chain; its full sequence is MVYKLVLLFCIASLGYSVEYKNTICPHRQDYRYWYFVAELTIGVNYDINSTIIGECHMSESYIDRNANIVLTGYGLKVNMTIMDTDQRFVAAAEGVGKDNKLSVLLFTTQRLDKVHHNISVTITCMEMNCGTTKYNSDLPESIHKSSSCDITINGSCVTCVNLETDPTKINPHYLHPKNKYLYHNSEYSMRGSYGVTFIDELNQCLLDIKELSYDICYRE.

The signal sequence occupies residues 1 to 17 (MVYKLVLLFCIASLGYS). N-linked (GlcNAc...) asparagine; by host glycans are attached at residues Asn49, Asn79, Asn118, and Asn154.

This sequence belongs to the orthopoxvirus OPG038 family. Homooligomer. Interacts with host CD80 and CD86 when secreted. Glycosylated by host.

Its subcellular location is the host endoplasmic reticulum. The protein resides in the secreted. Plays a role in immune evasion. When secreted, inhibits T-cell activation by preventing the binding of host CD80 and CD86 to soluble CTLA4 and CD28. In the infected cell, may inhibits host NF kappa B activation. This Cynomys gunnisoni (Gunnison's prairie dog) protein is Early protein OPG038 (OPG038).